A 509-amino-acid polypeptide reads, in one-letter code: Cytochrome P450 monooxygenase hepC (509 aa).

The helical transmembrane segment at 5 to 25 (MIIPSFWTGTAIIGLVACAYV) threads the bilayer. A heme-binding site is contributed by C454. An N-linked (GlcNAc...) asparagine glycan is attached at N491.

Belongs to the cytochrome P450 family. Heme serves as cofactor.

The protein resides in the membrane. Its pathway is secondary metabolite biosynthesis. In terms of biological role, cytochrome P450 monooxygenase; part of the gene cluster that mediates the biosynthesis of heptelidic acid (HA), a sesquiterpene lactone that acts as an inhibitor of glyceraldehyde-3-phosphatedehydrogenase (GAPDH) and a growth inhibitor of the salt-tolerant lactic acid bacteria in soy sauce brewing. The protein is Cytochrome P450 monooxygenase hepC of Aspergillus oryzae (strain ATCC 42149 / RIB 40) (Yellow koji mold).